Consider the following 860-residue polypeptide: Leucine--tRNA ligase (860 aa).

The 'HIGH' region motif lies at 42–52 (PYPSGRLHMGH). The short motif at 619–623 (KMSKS) is the 'KMSKS' region element. K622 is an ATP binding site.

This sequence belongs to the class-I aminoacyl-tRNA synthetase family.

It localises to the cytoplasm. The enzyme catalyses tRNA(Leu) + L-leucine + ATP = L-leucyl-tRNA(Leu) + AMP + diphosphate. This chain is Leucine--tRNA ligase, found in Histophilus somni (strain 2336) (Haemophilus somnus).